Here is a 455-residue protein sequence, read N- to C-terminus: MVEQGDAAPLLRWAEGPAVSVPQDPALQAGGWVRGGSGGGRVAAEAPRRREPEEPAPPEVLLQPGRLELGDVEEDQVVAVFVVTFDPRSGNMVEWCLPQDIDLEGVEFKSMASGSHKVQSDFIYFRKGPFFGLACFANMPVESELERGARMKSVGILSPSYTLLYRYMHFLENQVRHQLEMPGHYSHLAAFYEDKKGVLHAGPGRGGSLPPVYWLPSIHRYMYPEMKITHPAGCMSQFIKFFGEQILILWKFALLRKRILIFSPPPVGVVCYRVYCCCCLANVSLPGIGGTIPESKPFFYVNVADIESLEVEVSYVACTTEKIFEEKRELYDVYVDNQNVKTHHDHLQPLLKLNSADREKYRRLNEQRQMLLYSQEVEGDYSPCEEDLFVLFFLEQNNRIFQTLLEVSASQDKTLTAEHARGMGLDPQGDRSFLMDLLEAYGIDVMLVIDNPCCP.

Position 2 is an N-acetylvaline (valine 2). One can recognise a uDENN domain in the interval 15-187 (EGPAVSVPQD…QLEMPGHYSH (173 aa)). The segment at 21–61 (VPQDPALQAGGWVRGGSGGGRVAAEAPRRREPEEPAPPEVL) is disordered. Positions 32-41 (WVRGGSGGGR) are enriched in gly residues. At arginine 41 the chain carries Omega-N-methylarginine. The cDENN domain occupies 214-362 (WLPSIHRYMY…LNSADREKYR (149 aa)). The dDENN domain occupies 364 to 455 (LNEQRQMLLY…MLVIDNPCCP (92 aa)).

The protein belongs to the DENND11 family. Expressed within the somatodendritic compartment of neurons, is also present on dendritic growth cones, but is not found in astrocytes.

Functionally, probable guanine nucleotide exchange factor (GEF). May promote the exchange of GDP to GTP, converting inactive GDP-bound small GTPases into their active GTP-bound form. May play a role in neuritogenesis, as well as in neuronal recovery and/or restructuring in the hippocampus following transient cerebral ischemia. The chain is DENN domain-containing protein 11 (Dennd11) from Rattus norvegicus (Rat).